The primary structure comprises 392 residues: Probable tRNA sulfurtransferase (392 aa).

The region spanning 59-166 is the THUMP domain; it reads SCYREALKRV…DEGLFIYTTE (108 aa). ATP contacts are provided by residues 186–187, 211–212, Arg269, Gly290, and Gln299; these read LL and YF.

It belongs to the ThiI family.

The protein localises to the cytoplasm. It carries out the reaction [ThiI sulfur-carrier protein]-S-sulfanyl-L-cysteine + a uridine in tRNA + 2 reduced [2Fe-2S]-[ferredoxin] + ATP + H(+) = [ThiI sulfur-carrier protein]-L-cysteine + a 4-thiouridine in tRNA + 2 oxidized [2Fe-2S]-[ferredoxin] + AMP + diphosphate. It catalyses the reaction [ThiS sulfur-carrier protein]-C-terminal Gly-Gly-AMP + S-sulfanyl-L-cysteinyl-[cysteine desulfurase] + AH2 = [ThiS sulfur-carrier protein]-C-terminal-Gly-aminoethanethioate + L-cysteinyl-[cysteine desulfurase] + A + AMP + 2 H(+). Its pathway is cofactor biosynthesis; thiamine diphosphate biosynthesis. Catalyzes the ATP-dependent transfer of a sulfur to tRNA to produce 4-thiouridine in position 8 of tRNAs, which functions as a near-UV photosensor. Also catalyzes the transfer of sulfur to the sulfur carrier protein ThiS, forming ThiS-thiocarboxylate. This is a step in the synthesis of thiazole, in the thiamine biosynthesis pathway. The sulfur is donated as persulfide by IscS. The protein is Probable tRNA sulfurtransferase of Coxiella burnetii (strain RSA 493 / Nine Mile phase I).